We begin with the raw amino-acid sequence, 214 residues long: Uridine kinase (214 aa).

11-18 contributes to the ATP binding site; sequence GGSGSGKT.

The protein belongs to the uridine kinase family.

The protein localises to the cytoplasm. It carries out the reaction uridine + ATP = UMP + ADP + H(+). It catalyses the reaction cytidine + ATP = CMP + ADP + H(+). The protein operates within pyrimidine metabolism; CTP biosynthesis via salvage pathway; CTP from cytidine: step 1/3. It participates in pyrimidine metabolism; UMP biosynthesis via salvage pathway; UMP from uridine: step 1/1. In Brevibacillus brevis (strain 47 / JCM 6285 / NBRC 100599), this protein is Uridine kinase.